The following is a 166-amino-acid chain: Ribosome-binding factor A (166 aa).

The disordered stretch occupies residues leucine 122–glycine 166. Basic and acidic residues predominate over residues histidine 128–aspartate 138. Acidic residues predominate over residues threonine 139–aspartate 150. A compositionally biased stretch (basic and acidic residues) spans alanine 151 to glycine 166.

Belongs to the RbfA family. Monomer. Binds 30S ribosomal subunits, but not 50S ribosomal subunits or 70S ribosomes.

The protein resides in the cytoplasm. Functionally, one of several proteins that assist in the late maturation steps of the functional core of the 30S ribosomal subunit. Associates with free 30S ribosomal subunits (but not with 30S subunits that are part of 70S ribosomes or polysomes). Required for efficient processing of 16S rRNA. May interact with the 5'-terminal helix region of 16S rRNA. The protein is Ribosome-binding factor A of Saccharopolyspora erythraea (strain ATCC 11635 / DSM 40517 / JCM 4748 / NBRC 13426 / NCIMB 8594 / NRRL 2338).